Here is a 160-residue protein sequence, read N- to C-terminus: UPF0479 membrane protein YLL066W-A (160 aa).

A run of 2 helical transmembrane segments spans residues 39–59 (IVFCLPFFPALFLVPVQKVLQ) and 136–156 (VPMIWLDVFQVFFVFLVISQH).

The protein belongs to the UPF0479 family.

Its subcellular location is the membrane. The polypeptide is UPF0479 membrane protein YLL066W-A (Saccharomyces cerevisiae (strain ATCC 204508 / S288c) (Baker's yeast)).